The primary structure comprises 342 residues: MEPHDSSHMDSEFRYTLFPIVYSIIFVLGVIANGYVLWVFARLYPCKKFNEIKIFMVNLTMADMLFLITLPLWIVYYQNQGNWILPKFLCNVAGCLFFINTYCSVAFLGVITYNRFQAVTRPIKTAQANTRKRGISLSLVIWVAIVGAASYFLILDSTNTVPDSAGSGNVTRCFEHYEKGSVPVLIIHIFIVFSFFLVFLIILFCNLVIIRTLLMQPVQQQRNAEVKRRALWMVCTVLAVFIICFVPHHVVQLPWTLAELGFQDSKFHQAINDAHQVTLCLLSTNCVLDPVIYCFLTKKFRKHLTEKFYSMRSSRKCSRATTDTVTEVVVPFNQIPGNSLKN.

Residues M1–T16 lie on the Extracellular side of the membrane. The chain crosses the membrane as a helical span at residues L17–W38. At V39–I54 the chain is on the cytoplasmic side. A helical transmembrane segment spans residues F55–I74. Over V75–N91 the chain is Extracellular. C90 and C173 form a disulfide bridge. A helical transmembrane segment spans residues V92–Y113. Over N114–R133 the chain is Cytoplasmic. The chain crosses the membrane as a helical span at residues G134 to L155. Topologically, residues D156–V184 are extracellular. N169 is a glycosylation site (N-linked (GlcNAc...) asparagine). A helical membrane pass occupies residues L185–C205. At N206–M233 the chain is on the cytoplasmic side. Residues V234–P254 form a helical membrane-spanning segment. Topologically, residues W255–Q276 are extracellular. The helical transmembrane segment at V277–L296 threads the bilayer. Residues T297–N342 lie on the Cytoplasmic side of the membrane.

This sequence belongs to the G-protein coupled receptor 1 family. As to quaternary structure, interacts with ARRB1. As to expression, expressed in the placenta, lung, left and right heart ventricles, heart atrium, leukocytes and differentiated HL-60 granulocytes.

Its subcellular location is the cell membrane. Receptor for platelet activating factor, a chemotactic phospholipid mediator that possesses potent inflammatory, smooth-muscle contractile and hypotensive activity. Seems to mediate its action via a G protein that activates a phosphatidylinositol-calcium second messenger system. This is Platelet-activating factor receptor (PTAFR) from Homo sapiens (Human).